Here is a 571-residue protein sequence, read N- to C-terminus: uncharacterized protein (571 aa).

A run of 5 helical transmembrane segments spans residues 10 to 29, 36 to 55, 65 to 87, 96 to 118, and 166 to 188; these read VRLH…HFIG, VSLG…GLLF, WAFF…FASL, ALAV…LFRF, and ATTY…PRLL. In terms of domain architecture, RCK C-terminal spans 294–378; that stretch reads TEVDDQELLS…IATAARNLGF (85 aa). Helical transmembrane passes span 388–406, 411–433, 446–465, 480–502, 509–531, and 546–568; these read LVYL…LLQV, VPLG…WLYS, LRLL…GLAA, LFAK…GLLL, LPPI…LNAL, and VPFA…CAVA.

It belongs to the AAE transporter (TC 2.A.81) family.

It localises to the cell membrane. This is an uncharacterized protein from Bordetella bronchiseptica (strain ATCC BAA-588 / NCTC 13252 / RB50) (Alcaligenes bronchisepticus).